Consider the following 227-residue polypeptide: Cytochrome c oxidase subunit 2 (227 aa).

Residues 1-26 (MATWSNFNLQNSASPLMEQIIFFHDH) are Mitochondrial intermembrane-facing. The helical transmembrane segment at 27–51 (TLVILIMITILVGYLMISLFFNSYI) threads the bilayer. The Mitochondrial matrix portion of the chain corresponds to 52–62 (NRFLLEGQMIE). Residues 63–81 (LIWTILPAITLIFIALPSL) traverse the membrane as a helical segment. At 82-227 (RLLYLLDELN…NFINWINNYS (146 aa)) the chain is on the mitochondrial intermembrane side. The Cu cation site is built by histidine 161, cysteine 196, glutamate 198, cysteine 200, histidine 204, and methionine 207. Glutamate 198 lines the Mg(2+) pocket.

Belongs to the cytochrome c oxidase subunit 2 family. In terms of assembly, component of the cytochrome c oxidase (complex IV, CIV), a multisubunit enzyme composed of a catalytic core of 3 subunits and several supernumerary subunits. The complex exists as a monomer or a dimer and forms supercomplexes (SCs) in the inner mitochondrial membrane with ubiquinol-cytochrome c oxidoreductase (cytochrome b-c1 complex, complex III, CIII). It depends on Cu cation as a cofactor.

Its subcellular location is the mitochondrion inner membrane. The enzyme catalyses 4 Fe(II)-[cytochrome c] + O2 + 8 H(+)(in) = 4 Fe(III)-[cytochrome c] + 2 H2O + 4 H(+)(out). In terms of biological role, component of the cytochrome c oxidase, the last enzyme in the mitochondrial electron transport chain which drives oxidative phosphorylation. The respiratory chain contains 3 multisubunit complexes succinate dehydrogenase (complex II, CII), ubiquinol-cytochrome c oxidoreductase (cytochrome b-c1 complex, complex III, CIII) and cytochrome c oxidase (complex IV, CIV), that cooperate to transfer electrons derived from NADH and succinate to molecular oxygen, creating an electrochemical gradient over the inner membrane that drives transmembrane transport and the ATP synthase. Cytochrome c oxidase is the component of the respiratory chain that catalyzes the reduction of oxygen to water. Electrons originating from reduced cytochrome c in the intermembrane space (IMS) are transferred via the dinuclear copper A center (CU(A)) of subunit 2 and heme A of subunit 1 to the active site in subunit 1, a binuclear center (BNC) formed by heme A3 and copper B (CU(B)). The BNC reduces molecular oxygen to 2 water molecules using 4 electrons from cytochrome c in the IMS and 4 protons from the mitochondrial matrix. In Choristoneura rosaceana (Oblique banded leafroller), this protein is Cytochrome c oxidase subunit 2 (COII).